The sequence spans 287 residues: Pantothenate synthetase (287 aa).

30 to 37 is an ATP binding site; the sequence is MGNLHDGH. The Proton donor role is filled by H37. A (R)-pantoate-binding site is contributed by Q61. Residue Q61 coordinates beta-alanine. Residue 148–151 coordinates ATP; sequence GQKD. Q154 contributes to the (R)-pantoate binding site. Residues I177 and 185 to 188 each bind ATP; that span reads LSSR.

The protein belongs to the pantothenate synthetase family. In terms of assembly, homodimer.

The protein localises to the cytoplasm. It catalyses the reaction (R)-pantoate + beta-alanine + ATP = (R)-pantothenate + AMP + diphosphate + H(+). It functions in the pathway cofactor biosynthesis; (R)-pantothenate biosynthesis; (R)-pantothenate from (R)-pantoate and beta-alanine: step 1/1. Its function is as follows. Catalyzes the condensation of pantoate with beta-alanine in an ATP-dependent reaction via a pantoyl-adenylate intermediate. This is Pantothenate synthetase from Psychrobacter cryohalolentis (strain ATCC BAA-1226 / DSM 17306 / VKM B-2378 / K5).